Reading from the N-terminus, the 528-residue chain is Galactokinase (528 aa).

Residues R53, E59, H60, and D62 each coordinate alpha-D-galactose. ATP-binding residues include G165, G167, S169, and S170. 2 residues coordinate alpha-D-galactose: N213 and D217. The active-site Proton acceptor is the D217. 3 residues coordinate ATP: S264, N265, and K266. Y274 serves as a coordination point for alpha-D-galactose. A Phosphoserine modification is found at S381.

Belongs to the GHMP kinase family. GalK subfamily.

It carries out the reaction alpha-D-galactose + ATP = alpha-D-galactose 1-phosphate + ADP + H(+). Its pathway is carbohydrate metabolism; galactose metabolism. Its function is as follows. Galactokinase is a key enzyme in the galactose metabolism where it catalyzes the conversion of alpha-D-galactose to galactose 1-phosphate. Can also induce the transcription of the yeast GAL genes in response to the organism being challenged with galactose as the sole source of carbon. It's striking amino acid sequence similarity to GAL3 might explain its GAL3-like induction activity. The chain is Galactokinase from Saccharomyces cerevisiae (strain ATCC 204508 / S288c) (Baker's yeast).